A 55-amino-acid chain; its full sequence is Large ribosomal subunit protein bL33B (55 aa).

It belongs to the bacterial ribosomal protein bL33 family.

In Mycobacteroides abscessus (strain ATCC 19977 / DSM 44196 / CCUG 20993 / CIP 104536 / JCM 13569 / NCTC 13031 / TMC 1543 / L948) (Mycobacterium abscessus), this protein is Large ribosomal subunit protein bL33B.